A 1782-amino-acid chain; its full sequence is Signal-induced proliferation-associated 1-like protein 1 (1782 aa).

Disordered regions lie at residues 1-28 (MTSL…GAPK), 47-125 (GSSV…VSLN), and 140-171 (KNKT…RRIR). Residues 84-94 (PPRKENVKESS) show a composition bias toward basic and acidic residues. Positions 95-125 (RSSQEIETSSCLESLSSKGSPVSQGSSVSLN) are enriched in low complexity. A phosphoserine mark is found at Ser162, Ser187, Ser193, Ser208, Ser255, and Ser288. The disordered stretch occupies residues 277–297 (EREKPLKRRSKSETGDSSIFR). The region spanning 599-816 (LMKLDEQGLN…RTRQEYLKDL (218 aa)) is the Rap-GAP domain. The PDZ domain maps to 953–1031 (EMTLRRNGLG…VVIIPPHDDC (79 aa)). Disordered regions lie at residues 1069–1128 (QRNA…RLSP) and 1144–1213 (SQCR…SLAD). Ser1078, Ser1087, Ser1116, Ser1127, Ser1149, Ser1170, and Ser1181 each carry phosphoserine. The segment covering 1080–1093 (QVPSQLQSPMTSRL) has biased composition (polar residues). A compositionally biased stretch (low complexity) spans 1149–1159 (SPSNLSSSSET). The span at 1186–1205 (DRQNTQSDISGSGKSTPSWQ) shows a compositional bias: polar residues. A phosphoserine mark is found at Ser1234 and Ser1249. Residues 1247 to 1285 (HLSPNKQGHSDSHYSSHSSSNTLSSNASSAHSDEKWYDG) form a disordered region. A compositionally biased stretch (low complexity) spans 1261–1276 (SSHSSSNTLSSNASSA). The residue at position 1305 (Ser1305) is a Phosphoserine; by PLK2. Residues 1307 to 1342 (IDTASYGPSHGSTASLGASTSSPRSGPGKEKVAPLW) are disordered. Thr1309 carries the post-translational modification Phosphothreonine; by PLK2. Positions 1315-1328 (SHGSTASLGASTSS) are enriched in low complexity. At Ser1328 the chain carries Phosphoserine; by CDK5. The residue at position 1345 (Ser1345) is a Phosphoserine. Positions 1358 to 1368 (TEGHGMDRKAE) are enriched in basic and acidic residues. A disordered region spans residues 1358–1454 (TEGHGMDRKA…SSSGPRTFYP (97 aa)). Phosphoserine is present on residues Ser1369, Ser1370, Ser1391, Ser1410, and Ser1412. Polar residues predominate over residues 1378-1410 (KSQGGSSPLSRENSTFSINDAASHTSTMSSRHS). Over residues 1432–1447 (SSQLAPSFSSSSSSSS) the composition is skewed to low complexity. 2 positions are modified to phosphoserine: Ser1507 and Ser1528. Position 1530 is a phosphothreonine (Thr1530). Phosphoserine is present on residues Ser1533, Ser1544, Ser1547, Ser1564, and Ser1567. Arg1580 is subject to Asymmetric dimethylarginine. 9 positions are modified to phosphoserine: Ser1582, Ser1624, Ser1626, Ser1629, Ser1687, Ser1690, Ser1707, Ser1708, and Ser1712. The disordered stretch occupies residues 1625 to 1647 (ASDSSLTDIQETRRQPIPDPGLM). Residues 1713–1773 (PTLASKVDQL…ASDKLKKFTE (61 aa)) adopt a coiled-coil conformation.

As to quaternary structure, interacts with DLG4, PDLIM5, PDLIM7 and LZTS3. Interacts with the actin cytoskeleton. Interacts (via PDZ domain) with EPHA4 (via PDZ motif); controls neuronal morphology through regulation of the RAP1 (RAP1A or RAP1B) and RAP2 (RAP2A, RAP2B or RAP2C) GTPases. In terms of processing, ubiquitinated and degraded by the SCF(BTRC) following phosphorylation by PLK2. Phosphorylated at Ser-1328 by CDK5, creating a docking site for the POLO box domains of PLK2. Subsequently, PLK2 binds and phosphorylates SIPA1L1, leading to ubiquitination and degradation by the proteasome.

It localises to the cytoplasm. The protein localises to the cytoskeleton. Its subcellular location is the postsynaptic density. The protein resides in the synapse. It is found in the synaptosome. Stimulates the GTPase activity of RAP2A. Promotes reorganization of the actin cytoskeleton and recruits DLG4 to F-actin. Contributes to the regulation of dendritic spine morphogenesis. The polypeptide is Signal-induced proliferation-associated 1-like protein 1 (Sipa1l1) (Mus musculus (Mouse)).